The following is a 449-amino-acid chain: Na(+)/H(+) antiporter NhaA 1 (449 aa).

The next 11 helical transmembrane spans lie at 38-58 (GILL…PWAA), 79-99 (FTIR…VVGM), 117-137 (VLPL…YAAF), 145-165 (AGWA…LTLV), 175-195 (VFLT…IALF), 198-218 (SGLH…LACL), 240-260 (MHHG…FMPA), 311-331 (FVHL…ALAN), 347-367 (PLPL…IFLF), 390-410 (GVAV…GLAF), and 422-442 (LGIL…LRFV).

The protein belongs to the NhaA Na(+)/H(+) (TC 2.A.33) antiporter family.

It localises to the cell inner membrane. It catalyses the reaction Na(+)(in) + 2 H(+)(out) = Na(+)(out) + 2 H(+)(in). Its function is as follows. Na(+)/H(+) antiporter that extrudes sodium in exchange for external protons. The chain is Na(+)/H(+) antiporter NhaA 1 from Myxococcus xanthus (strain DK1622).